Consider the following 410-residue polypeptide: LL-diaminopimelate aminotransferase (410 aa).

Tyr-15 and Gly-42 together coordinate substrate. Residues Tyr-72, 108 to 109, Tyr-132, Asn-187, Tyr-218, and 246 to 248 each bind pyridoxal 5'-phosphate; these read SK and SFS. Residues Lys-109, Tyr-132, and Asn-187 each contribute to the substrate site. Lys-249 carries the N6-(pyridoxal phosphate)lysine modification. Pyridoxal 5'-phosphate is bound by residues Arg-257 and Asn-292. 2 residues coordinate substrate: Asn-292 and Arg-388.

The protein belongs to the class-I pyridoxal-phosphate-dependent aminotransferase family. LL-diaminopimelate aminotransferase subfamily. Homodimer. The cofactor is pyridoxal 5'-phosphate.

The enzyme catalyses (2S,6S)-2,6-diaminopimelate + 2-oxoglutarate = (S)-2,3,4,5-tetrahydrodipicolinate + L-glutamate + H2O + H(+). The protein operates within amino-acid biosynthesis; L-lysine biosynthesis via DAP pathway; LL-2,6-diaminopimelate from (S)-tetrahydrodipicolinate (aminotransferase route): step 1/1. Functionally, involved in the synthesis of meso-diaminopimelate (m-DAP or DL-DAP), required for both lysine and peptidoglycan biosynthesis. Catalyzes the direct conversion of tetrahydrodipicolinate to LL-diaminopimelate. The protein is LL-diaminopimelate aminotransferase of Geotalea uraniireducens (strain Rf4) (Geobacter uraniireducens).